A 143-amino-acid polypeptide reads, in one-letter code: uncharacterized protein (143 aa).

This is an uncharacterized protein from Saccharomyces cerevisiae (strain ATCC 204508 / S288c) (Baker's yeast).